Here is an 83-residue protein sequence, read N- to C-terminus: Beta-defensin 19 (83 aa).

The N-terminal stretch at 1 to 19 is a signal peptide; that stretch reads MRLALLLLAILVATELVVS. Disulfide bonds link Cys-27–Cys-54, Cys-34–Cys-48, and Cys-38–Cys-55.

It belongs to the beta-defensin family. As to expression, specifically expressed in male gonads (Sertoli cells).

It localises to the secreted. Its function is as follows. Has antibacterial activity. In Mus musculus (Mouse), this protein is Beta-defensin 19 (Defb19).